A 509-amino-acid chain; its full sequence is Maturase K (509 aa).

This sequence belongs to the intron maturase 2 family. MatK subfamily.

It localises to the plastid. The protein resides in the chloroplast. In terms of biological role, usually encoded in the trnK tRNA gene intron. Probably assists in splicing its own and other chloroplast group II introns. In Nicotiana bigelovii (Bigelov's tobacco), this protein is Maturase K.